Here is a 152-residue protein sequence, read N- to C-terminus: SsrA-binding protein (152 aa).

The protein belongs to the SmpB family.

The protein resides in the cytoplasm. In terms of biological role, required for rescue of stalled ribosomes mediated by trans-translation. Binds to transfer-messenger RNA (tmRNA), required for stable association of tmRNA with ribosomes. tmRNA and SmpB together mimic tRNA shape, replacing the anticodon stem-loop with SmpB. tmRNA is encoded by the ssrA gene; the 2 termini fold to resemble tRNA(Ala) and it encodes a 'tag peptide', a short internal open reading frame. During trans-translation Ala-aminoacylated tmRNA acts like a tRNA, entering the A-site of stalled ribosomes, displacing the stalled mRNA. The ribosome then switches to translate the ORF on the tmRNA; the nascent peptide is terminated with the 'tag peptide' encoded by the tmRNA and targeted for degradation. The ribosome is freed to recommence translation, which seems to be the essential function of trans-translation. The sequence is that of SsrA-binding protein from Rickettsia rickettsii.